The primary structure comprises 81 residues: Photosystem I iron-sulfur center (81 aa).

4Fe-4S ferredoxin-type domains are found at residues 2–31 (SHTV…MVPW) and 39–68 (IASA…VRVY). [4Fe-4S] cluster contacts are provided by cysteine 11, cysteine 14, cysteine 17, cysteine 21, cysteine 48, cysteine 51, cysteine 54, and cysteine 58.

The eukaryotic PSI reaction center is composed of at least 11 subunits. The cofactor is [4Fe-4S] cluster.

It is found in the plastid. It localises to the chloroplast thylakoid membrane. It catalyses the reaction reduced [plastocyanin] + hnu + oxidized [2Fe-2S]-[ferredoxin] = oxidized [plastocyanin] + reduced [2Fe-2S]-[ferredoxin]. Apoprotein for the two 4Fe-4S centers FA and FB of photosystem I (PSI); essential for photochemical activity. FB is the terminal electron acceptor of PSI, donating electrons to ferredoxin. The C-terminus interacts with PsaA/B/D and helps assemble the protein into the PSI complex. Required for binding of PsaD and PsaE to PSI. PSI is a plastocyanin/cytochrome c6-ferredoxin oxidoreductase, converting photonic excitation into a charge separation, which transfers an electron from the donor P700 chlorophyll pair to the spectroscopically characterized acceptors A0, A1, FX, FA and FB in turn. This Chlorella vulgaris (Green alga) protein is Photosystem I iron-sulfur center.